The chain runs to 274 residues: NAD kinase (274 aa).

Asp61 functions as the Proton acceptor in the catalytic mechanism. Residues 61–62 (DG), Lys66, 134–135 (ND), Lys145, Asp164, and 175–180 (TAYSLS) contribute to the NAD(+) site.

Belongs to the NAD kinase family. A divalent metal cation is required as a cofactor.

It localises to the cytoplasm. It catalyses the reaction NAD(+) + ATP = ADP + NADP(+) + H(+). Functionally, involved in the regulation of the intracellular balance of NAD and NADP, and is a key enzyme in the biosynthesis of NADP. Catalyzes specifically the phosphorylation on 2'-hydroxyl of the adenosine moiety of NAD to yield NADP. The sequence is that of NAD kinase from Clostridium tetani (strain Massachusetts / E88).